The primary structure comprises 247 residues: Trypsin (247 aa).

The N-terminal stretch at Leu-1–Ala-21 is a signal peptide. The propeptide at Thr-22 to Arg-30 is activation peptide. The Peptidase S1 domain occupies Ile-31–Ile-247. The cysteines at positions 61 and 77 are disulfide-linked. Catalysis depends on charge relay system residues His-76 and Asp-120. Intrachain disulfides connect Cys-185–Cys-201 and Cys-212–Cys-236. Ser-216 serves as the catalytic Charge relay system.

This sequence belongs to the peptidase S1 family. Midgut.

Its subcellular location is the secreted. It localises to the extracellular space. The enzyme catalyses Preferential cleavage: Arg-|-Xaa, Lys-|-Xaa.. The protein is Trypsin of Simulium vittatum (Striped black fly).